A 237-amino-acid chain; its full sequence is Pyridoxine 5'-phosphate synthase (237 aa).

Residues Asn-7 and Arg-18 each coordinate 3-amino-2-oxopropyl phosphate. Residue His-43 is the Proton acceptor of the active site. Residues Arg-45 and His-50 each coordinate 1-deoxy-D-xylulose 5-phosphate. Glu-70 functions as the Proton acceptor in the catalytic mechanism. Thr-100 provides a ligand contact to 1-deoxy-D-xylulose 5-phosphate. His-190 functions as the Proton donor in the catalytic mechanism. Residues Asp-191 and 213–214 contribute to the 3-amino-2-oxopropyl phosphate site; that span reads GH.

It belongs to the PNP synthase family. Homooctamer; tetramer of dimers.

The protein resides in the cytoplasm. It catalyses the reaction 3-amino-2-oxopropyl phosphate + 1-deoxy-D-xylulose 5-phosphate = pyridoxine 5'-phosphate + phosphate + 2 H2O + H(+). The protein operates within cofactor biosynthesis; pyridoxine 5'-phosphate biosynthesis; pyridoxine 5'-phosphate from D-erythrose 4-phosphate: step 5/5. In terms of biological role, catalyzes the complicated ring closure reaction between the two acyclic compounds 1-deoxy-D-xylulose-5-phosphate (DXP) and 3-amino-2-oxopropyl phosphate (1-amino-acetone-3-phosphate or AAP) to form pyridoxine 5'-phosphate (PNP) and inorganic phosphate. This is Pyridoxine 5'-phosphate synthase from Bacteroides fragilis (strain ATCC 25285 / DSM 2151 / CCUG 4856 / JCM 11019 / LMG 10263 / NCTC 9343 / Onslow / VPI 2553 / EN-2).